Consider the following 185-residue polypeptide: Ribosome-recycling factor (185 aa).

The segment covering isoleucine 142 to threonine 164 has biased composition (basic and acidic residues). The interval isoleucine 142–aspartate 173 is disordered.

This sequence belongs to the RRF family.

The protein localises to the cytoplasm. Functionally, responsible for the release of ribosomes from messenger RNA at the termination of protein biosynthesis. May increase the efficiency of translation by recycling ribosomes from one round of translation to another. This chain is Ribosome-recycling factor, found in Mycolicibacterium gilvum (strain PYR-GCK) (Mycobacterium gilvum (strain PYR-GCK)).